Reading from the N-terminus, the 391-residue chain is Processive diacylglycerol beta-glucosyltransferase (391 aa).

It belongs to the glycosyltransferase 28 family. UgtP subfamily.

Its subcellular location is the cell membrane. It carries out the reaction a 1,2-diacyl-3-O-(beta-D-glucopyranosyl)-sn-glycerol + UDP-alpha-D-glucose = a 1,2-diacyl-3-O-(beta-D-Glc-(1-&gt;6)-beta-D-Glc)-sn-glycerol + UDP + H(+). It catalyses the reaction a 1,2-diacyl-sn-glycerol + UDP-alpha-D-glucose = a 1,2-diacyl-3-O-(beta-D-glucopyranosyl)-sn-glycerol + UDP + H(+). It participates in glycolipid metabolism; diglucosyl-diacylglycerol biosynthesis. Its function is as follows. Processive glucosyltransferase involved in the biosynthesis of both the bilayer- and non-bilayer-forming membrane glucolipids. Is able to successively transfer two glucosyl residues to diacylglycerol (DAG), thereby catalyzing the formation of beta-monoglucosyl-DAG (3-O-(beta-D-glucopyranosyl)-1,2-diacyl-sn-glycerol) and beta-diglucosyl-DAG (3-O-(beta-D-glucopyranosyl-beta-(1-&gt;6)-D-glucopyranosyl)-1,2-diacyl-sn-glycerol). Beta-diglucosyl-DAG is the predominant glycolipid found in Bacillales and is also used as a membrane anchor for lipoteichoic acid (LTA). This chain is Processive diacylglycerol beta-glucosyltransferase, found in Staphylococcus saprophyticus subsp. saprophyticus (strain ATCC 15305 / DSM 20229 / NCIMB 8711 / NCTC 7292 / S-41).